The sequence spans 606 residues: Sulfite reductase [NADPH] flavoprotein alpha-component (606 aa).

Residues 64–202 (VTLISASQTG…QAQQWRQQVV (139 aa)) form the Flavodoxin-like domain. FMN contacts are provided by residues 70-75 (SQTGNA), 117-120 (STQG), and 153-162 (LGDTSYEHFC). Residues 212–234 (QSTAPTQSTTPAAAAITSGGTTT) are compositionally biased toward low complexity. Residues 212 to 235 (QSTAPTQSTTPAAAAITSGGTTTV) are disordered. In terms of domain architecture, FAD-binding FR-type spans 241–455 (TAPLTAQLSV…IEHNDNFRLP (215 aa)). FAD-binding positions include threonine 329, lysine 363, 393-396 (RLYS), 411-413 (TVG), tyrosine 417, and 426-429 (GGAS). NADP(+)-binding positions include 526 to 527 (SR), 532 to 536 (KIYVQ), and aspartate 568. Residue tyrosine 606 participates in FAD binding.

It belongs to the NADPH-dependent sulphite reductase flavoprotein subunit CysJ family. In the N-terminal section; belongs to the flavodoxin family. This sequence in the C-terminal section; belongs to the flavoprotein pyridine nucleotide cytochrome reductase family. As to quaternary structure, alpha(8)-beta(8). The alpha component is a flavoprotein, the beta component is a hemoprotein. It depends on FAD as a cofactor. FMN serves as cofactor.

The enzyme catalyses hydrogen sulfide + 3 NADP(+) + 3 H2O = sulfite + 3 NADPH + 4 H(+). Its pathway is sulfur metabolism; hydrogen sulfide biosynthesis; hydrogen sulfide from sulfite (NADPH route): step 1/1. Its function is as follows. Component of the sulfite reductase complex that catalyzes the 6-electron reduction of sulfite to sulfide. This is one of several activities required for the biosynthesis of L-cysteine from sulfate. The flavoprotein component catalyzes the electron flow from NADPH -&gt; FAD -&gt; FMN to the hemoprotein component. This Yersinia pestis bv. Antiqua (strain Antiqua) protein is Sulfite reductase [NADPH] flavoprotein alpha-component.